A 243-amino-acid chain; its full sequence is Probable transcriptional regulatory protein BRE_29 (243 aa).

The protein belongs to the TACO1 family.

The protein localises to the cytoplasm. This chain is Probable transcriptional regulatory protein BRE_29, found in Borrelia recurrentis (strain A1).